Reading from the N-terminus, the 558-residue chain is C4b-binding protein alpha chain (558 aa).

The first 13 residues, 1–13 (MSLTAALWVAVFG), serve as a signal peptide directing secretion. 8 Sushi domains span residues 14 to 74 (KCGP…ACVK), 75 to 136 (KSCR…ECVI), 137 to 201 (AKCG…TCER), 202 to 260 (IICP…VCEL), 261 to 326 (NSCT…GCKE), 327 to 388 (ICCP…SCHQ), 389 to 445 (SCDF…QCKA), and 446 to 503 (LCRK…RCEQ). Disulfide bonds link Cys-15/Cys-60, Cys-45/Cys-72, Cys-77/Cys-118, Cys-104/Cys-134, Cys-139/Cys-182, Cys-168/Cys-199, Cys-204/Cys-246, Cys-232/Cys-258, Cys-263/Cys-312, Cys-296/Cys-324, Cys-329/Cys-373, Cys-363/Cys-386, Cys-390/Cys-431, Cys-417/Cys-443, Cys-447/Cys-488, and Cys-474/Cys-501. Asn-31 carries N-linked (GlcNAc...) asparagine glycosylation. Asn-177 and Asn-186 each carry an N-linked (GlcNAc...) asparagine glycan. N-linked (GlcNAc...) asparagine glycans are attached at residues Asn-469 and Asn-491.

Disulfide-linked complex of alpha and beta chains.

The protein resides in the secreted. In terms of biological role, controls the classical pathway of complement activation. It binds as a cofactor to C3b/C4b inactivator (C3bINA), which then hydrolyzes the complement fragment C4b. It also accelerates the degradation of the C4bC2a complex (C3 convertase) by dissociating the complement fragment C2a. Alpha chain binds C4b. It also interacts with anticoagulant protein S and with serum amyloid P component. In Rattus norvegicus (Rat), this protein is C4b-binding protein alpha chain (C4bpa).